We begin with the raw amino-acid sequence, 31 residues long: Chassatide C6 (31 aa).

A cross-link (cyclopeptide (Gly-Asn)) is located at residues 1–31; the sequence is GVIPCGESCVFIPCISSVIGCSCKNKVCYRN. Disulfide bonds link C5–C21, C9–C23, and C14–C28.

Post-translationally, this is a cyclic peptide. Expressed in fruit, pedicel, root and stem but not in leaf (at protein level).

In terms of biological role, probably participates in a plant defense mechanism. The polypeptide is Chassatide C6 (Chassalia chartacea (Chassalia curviflora)).